Consider the following 43-residue polypeptide: Cytochrome b559 subunit beta (43 aa).

Residues 18–34 traverse the membrane as a helical segment; the sequence is WLAVHTLAVPSVFFLGA. H22 lines the heme pocket.

Belongs to the PsbE/PsbF family. Heterodimer of an alpha subunit and a beta subunit. PSII is composed of 1 copy each of membrane proteins PsbA, PsbB, PsbC, PsbD, PsbE, PsbF, PsbH, PsbI, PsbJ, PsbK, PsbL, PsbM, PsbT, PsbX, PsbY, PsbZ, Psb30/Ycf12, peripheral proteins PsbO, CyanoQ (PsbQ), PsbU, PsbV and a large number of cofactors. It forms dimeric complexes. Heme b serves as cofactor.

The protein resides in the cellular thylakoid membrane. This b-type cytochrome is tightly associated with the reaction center of photosystem II (PSII). PSII is a light-driven water:plastoquinone oxidoreductase that uses light energy to abstract electrons from H(2)O, generating O(2) and a proton gradient subsequently used for ATP formation. It consists of a core antenna complex that captures photons, and an electron transfer chain that converts photonic excitation into a charge separation. This chain is Cytochrome b559 subunit beta, found in Picosynechococcus sp. (strain ATCC 27264 / PCC 7002 / PR-6) (Agmenellum quadruplicatum).